Consider the following 263-residue polypeptide: Lens fiber major intrinsic protein (263 aa).

The Cytoplasmic segment spans residues methionine 1–phenylalanine 9. A helical transmembrane segment spans residues tryptophan 10–glycine 29. Residues alanine 30–valine 41 are Extracellular-facing. The helical transmembrane segment at leucine 42–valine 59 threads the bilayer. Residues glycine 60–histidine 61 are Cytoplasmic-facing. An intramembrane region (discontinuously helical) is located at residues isoleucine 62 to valine 77. An NPA 1 motif is present at residues asparagine 68 to alanine 70. Over glycine 78 to serine 82 the chain is Cytoplasmic. Residues leucine 83–serine 106 traverse the membrane as a helical segment. Residues valine 107–valine 127 lie on the Extracellular side of the membrane. A helical transmembrane segment spans residues glycine 128–threonine 148. The Cytoplasmic segment spans residues tyrosine 149–arginine 156. The chain crosses the membrane as a helical span at residues leucine 157–glycine 175. At methionine 176–tyrosine 178 the chain is on the extracellular side. Positions threonine 179–isoleucine 193 form an intramembrane region, discontinuously helical. An NPA 2 motif is present at residues asparagine 184–alanine 186. The Extracellular segment spans residues leucine 194–asparagine 200. Residues histidine 201 to leucine 222 traverse the membrane as a helical segment. Residues leucine 223–leucine 263 lie on the Cytoplasmic side of the membrane. Positions leucine 227–leucine 237 are interaction with CALM. At serine 235 the chain carries Phosphoserine. The tract at residues glycine 239 to leucine 263 is disordered. Serine 243 is modified (phosphoserine; by PKA). Serine 245 is modified (phosphoserine). Asparagine 246 carries the post-translational modification Deamidated asparagine.

The protein belongs to the MIP/aquaporin (TC 1.A.8) family. In terms of assembly, homotetramer; each monomer provides an independent water pore. Two homotetramers on opposing membranes can dimerize, forming a cell-cell junction. Interacts with CALM; the calcium-calmodulin/CALM complex interacts with the cytoplasmic domains of two aquaporins, leading to channel closure. Interacts with BFSP1 (via C-terminus); prevents calcium-dependent inhibition of the water channel activity. Fatty acylated at Met-1 and Lys-238. The acyl modifications, in decreasing order of ion abundance, are: oleoyl (C18:1) &gt; palmitoyl (C16:0) &gt; stearoyl (C18:0) &gt; eicosenoyl (C20:1) &gt; dihomo-gamma-linolenoyl (C20:3) &gt; palmitoleoyl (C16:1) &gt; eicosadienoyl (C20:2). Post-translationally, subject to partial proteolytic cleavage in the eye lens core. Partial proteolysis promotes interactions between tetramers from adjoining membranes. As to expression, major component of lens fiber junctions.

The protein localises to the cell membrane. The protein resides in the cell junction. The enzyme catalyses H2O(in) = H2O(out). Its activity is regulated as follows. The water channel activity is inhibited by calcium through calmodulin/CALM. Its function is as follows. Aquaporins form homotetrameric transmembrane channels, with each monomer independently mediating water transport across the plasma membrane along its osmotic gradient. Specifically expressed in lens fiber cells, this aquaporin is crucial for maintaining lens water homeostasis and transparency. Beyond water permeability, it also acts as a cell-to-cell adhesion molecule, forming thin junctions between lens fiber cells that are essential for maintaining the ordered structure and transparency of the lens. In Bos taurus (Bovine), this protein is Lens fiber major intrinsic protein.